A 420-amino-acid chain; its full sequence is MSGLPFHIPGYYYNSEKKRYFRIISSGQSTPSSNIYTKERLKRGKRFNNISKERTKGKGGNPVFNFSTYLFDRQFSQYPYSCNDDRDYLCAKNLKKINLRQLPVGTELQKIGWLREVNTIILTSKNGDILGCCLTPEDKSGVANEKYTSEGSIQDFSLSRIGLSNNPISSLVCNAMQIFWSTSPSLQNEGQFHISTYNQLLGESNNYRWGSLKLLKTPLCAESIGEMGFAVGGTSKIAIINREGKLTQSLQSKGDVFSLKYLGDNLVIAGCRNKSVLVYDLRTKKECVQRFYHGSSICSMQNLDFSQPKLLVSGLESKISLYDCRFLQSKKRPQSIMSYMGHSNLLERNLALMKNENGSIFSSAGDDYVLRFWKTDCSLPFKEMRVDDGKYLCRDGSWVKAMNGTGWVLPYGRGLLIYEP.

A DDB-boX motif is present at residues 73–75 (RQF). WD repeat units follow at residues 251–289 (QSKGDVFSLKYLGDNLVIAGCRNKSVLVYDLRTKKECVQ), 293–332 (HGSSICSMQNLDFSQPKLLVSGLESKISLYDCRFLQSKKR), and 341–383 (GHSN…PFKE).

It is found in the cytoplasm. Its subcellular location is the nucleus. This Schizosaccharomyces pombe (strain 972 / ATCC 24843) (Fission yeast) protein is WD repeat-containing protein 21 (wdr21).